The chain runs to 100 residues: MSDKTLTRMDLSEAVFREVGLSRNESAQLVESMLNHMSDALVRGEQVKISSFGTFSVRDKSARVGRNPKTGEEVPIQPRRVLTFRPSHLMKERVAAGNRK.

This sequence belongs to the bacterial histone-like protein family. In terms of assembly, heterodimer of an alpha and a beta chain.

In terms of biological role, this protein is one of the two subunits of integration host factor, a specific DNA-binding protein that functions in genetic recombination as well as in transcriptional and translational control. The chain is Integration host factor subunit alpha from Ruegeria pomeroyi (strain ATCC 700808 / DSM 15171 / DSS-3) (Silicibacter pomeroyi).